Consider the following 445-residue polypeptide: MREILHIQGGQCGNQIGAKFWEVICDEHGIDQTGKYAGDSDLQLERINVYYNEASGGRFVPRAVLMDLEPGTMDSLRSGPYGQIFRPDNFVFGQSGAGNNWAKGHYTEGAELIDSVLDVVRKEAENCDCLQGFQVCHSLGGGTGSGMGTLLISKIREEYPDRMMLTFSVFPSPKVSDTVVEPYNATLSVHQLVENADECMVLDNEALYDICFRTLKLATPTFGDLNHLISATMSGVTCCLRFPGQLNSDLRKLAVNLIPFPRLHFFMVGFAPLTSRGSQQYRALTVPELTQQMWDSKNMMCAADPRHGRYLTASAMFRGKMSTKEVDEQMLNVQNKNSSYFVEWIPNNVKSSVCDIPPTGLSMSSTFVGNSTSIQEMFRRVSEQFTAMFRRKAFLHWYTGEGMDEMEFTEAESNMNDLVAEYQQYQDATADEEEEYDEEEEEEAA.

GTP-binding residues include Q11, E69, S138, G142, T143, G144, N204, and N226. Mg(2+) is bound at residue E69. The disordered stretch occupies residues 421-445 (EYQQYQDATADEEEEYDEEEEEEAA). The segment covering 429-445 (TADEEEEYDEEEEEEAA) has biased composition (acidic residues).

It belongs to the tubulin family. As to quaternary structure, dimer of alpha and beta chains. A typical microtubule is a hollow water-filled tube with an outer diameter of 25 nm and an inner diameter of 15 nM. Alpha-beta heterodimers associate head-to-tail to form protofilaments running lengthwise along the microtubule wall with the beta-tubulin subunit facing the microtubule plus end conferring a structural polarity. Microtubules usually have 13 protofilaments but different protofilament numbers can be found in some organisms and specialized cells. It depends on Mg(2+) as a cofactor.

Its subcellular location is the cytoplasm. The protein localises to the cytoskeleton. Tubulin is the major constituent of microtubules, a cylinder consisting of laterally associated linear protofilaments composed of alpha- and beta-tubulin heterodimers. Microtubules grow by the addition of GTP-tubulin dimers to the microtubule end, where a stabilizing cap forms. Below the cap, tubulin dimers are in GDP-bound state, owing to GTPase activity of alpha-tubulin. In Triticum aestivum (Wheat), this protein is Tubulin beta-3 chain (TUBB3).